The sequence spans 199 residues: N-(5'-phosphoribosyl)anthranilate isomerase (199 aa).

It belongs to the TrpF family.

It carries out the reaction N-(5-phospho-beta-D-ribosyl)anthranilate = 1-(2-carboxyphenylamino)-1-deoxy-D-ribulose 5-phosphate. It functions in the pathway amino-acid biosynthesis; L-tryptophan biosynthesis; L-tryptophan from chorismate: step 3/5. The polypeptide is N-(5'-phosphoribosyl)anthranilate isomerase (Clostridium kluyveri (strain NBRC 12016)).